The primary structure comprises 116 residues: Large ribosomal subunit protein bL17 (116 aa).

The protein belongs to the bacterial ribosomal protein bL17 family. As to quaternary structure, part of the 50S ribosomal subunit. Contacts protein L32.

In Prochlorococcus marinus (strain MIT 9303), this protein is Large ribosomal subunit protein bL17.